The chain runs to 257 residues: UPF0246 protein BF4021 (257 aa).

Belongs to the UPF0246 family.

This chain is UPF0246 protein BF4021, found in Bacteroides fragilis (strain YCH46).